A 248-amino-acid polypeptide reads, in one-letter code: 1-(5-phosphoribosyl)-5-[(5-phosphoribosylamino)methylideneamino] imidazole-4-carboxamide isomerase (248 aa).

The active-site Proton acceptor is aspartate 8. Aspartate 129 acts as the Proton donor in catalysis.

The protein belongs to the HisA/HisF family.

It is found in the cytoplasm. The enzyme catalyses 1-(5-phospho-beta-D-ribosyl)-5-[(5-phospho-beta-D-ribosylamino)methylideneamino]imidazole-4-carboxamide = 5-[(5-phospho-1-deoxy-D-ribulos-1-ylimino)methylamino]-1-(5-phospho-beta-D-ribosyl)imidazole-4-carboxamide. Its pathway is amino-acid biosynthesis; L-histidine biosynthesis; L-histidine from 5-phospho-alpha-D-ribose 1-diphosphate: step 4/9. This chain is 1-(5-phosphoribosyl)-5-[(5-phosphoribosylamino)methylideneamino] imidazole-4-carboxamide isomerase, found in Desulfitobacterium hafniense (strain Y51).